Here is a 503-residue protein sequence, read N- to C-terminus: Intracellular exo-alpha-(1-&gt;5)-L-arabinofuranosidase (503 aa).

Alpha-L-arabinofuranose-binding residues include glutamate 27, asparagine 72, and asparagine 172. Glutamate 173 (proton donor/acceptor) is an active-site residue. Tyrosine 244, glutamate 292, and glutamine 352 together coordinate alpha-L-arabinofuranose. Glutamate 292 serves as the catalytic Nucleophile.

This sequence belongs to the glycosyl hydrolase 51 family. As to quaternary structure, homohexamer; trimer of dimers.

It localises to the cytoplasm. The enzyme catalyses Hydrolysis of terminal non-reducing alpha-L-arabinofuranoside residues in alpha-L-arabinosides.. It functions in the pathway glycan metabolism; L-arabinan degradation. Functionally, involved in the degradation of arabinan and is a key enzyme in the complete degradation of the plant cell wall. Catalyzes the cleavage of terminal alpha-(1-&gt;5)-arabinofuranosyl bonds in small oligosaccharides as alpha-(1-&gt;5)-linked arabinobiose/arabinotriose, but does not display significant activity against linear non-substituted arabinan. It is also highly efficient in the cleavage of alpha-(1-&gt;3)-linked arabinoside of xylobiose and of the alpha-(1-&gt;3)-linked arabinoside decorations of polymeric wheat arabinoxylan. It exhibits very low activity against sugar beet arabinan. In Acetivibrio thermocellus (strain ATCC 27405 / DSM 1237 / JCM 9322 / NBRC 103400 / NCIMB 10682 / NRRL B-4536 / VPI 7372) (Clostridium thermocellum), this protein is Intracellular exo-alpha-(1-&gt;5)-L-arabinofuranosidase.